The chain runs to 382 residues: (R,R)-butanediol dehydrogenase (382 aa).

Residue cysteine 39 participates in Zn(2+) binding. Serine 63 carries the post-translational modification Phosphoserine. 6 residues coordinate Zn(2+): histidine 73, cysteine 103, cysteine 120, cysteine 123, cysteine 131, and glutamate 173.

Belongs to the zinc-containing alcohol dehydrogenase family. In terms of assembly, homodimer. Zn(2+) serves as cofactor.

Its subcellular location is the cytoplasm. The catalysed reaction is (R,R)-butane-2,3-diol + NAD(+) = (R)-acetoin + NADH + H(+). Its function is as follows. NAD-dependent (R,R)-butanediol dehydrogenase which catalyzes oxidation of (R,R)-butane-2,3-diol to (3R)-acetoin, of meso-butanediol to (3S)-acetoin, and reduction of acetoin. Allows the use of 2,3-butanediol as an aerobic carbon source. This is (R,R)-butanediol dehydrogenase (BDH1) from Saccharomyces cerevisiae (strain ATCC 204508 / S288c) (Baker's yeast).